The primary structure comprises 276 residues: Mitochondrial outer membrane protein porin 1 (276 aa).

Belongs to the eukaryotic mitochondrial porin (TC 1.B.8.1) family. In terms of tissue distribution, expressed in shoot meristems, root meristematic zone, lateral roots, leaves, stigma and anthers.

Its subcellular location is the mitochondrion outer membrane. Functionally, forms a channel through the mitochondrial outer membrane that allows diffusion of small hydrophilic molecules. The channel adopts an open conformation at low or zero membrane potential and a closed conformation at potentials above 30-40 mV. The open state has a weak anion selectivity whereas the closed state is cation-selective. Involved in plant development at reproductive stage, is important for pollen development and may regulate hydrogen peroxide generation during disease resistance. This chain is Mitochondrial outer membrane protein porin 1 (VDAC1), found in Arabidopsis thaliana (Mouse-ear cress).